The chain runs to 611 residues: Dihydroxy-acid dehydratase (611 aa).

Aspartate 81 lines the Mg(2+) pocket. Cysteine 122 contributes to the [2Fe-2S] cluster binding site. Mg(2+) contacts are provided by aspartate 123 and lysine 124. Residue lysine 124 is modified to N6-carboxylysine. [2Fe-2S] cluster is bound at residue cysteine 195. Mg(2+) is bound at residue glutamate 491. Serine 517 serves as the catalytic Proton acceptor.

It belongs to the IlvD/Edd family. Homodimer. The cofactor is [2Fe-2S] cluster. Mg(2+) serves as cofactor.

The enzyme catalyses (2R)-2,3-dihydroxy-3-methylbutanoate = 3-methyl-2-oxobutanoate + H2O. It catalyses the reaction (2R,3R)-2,3-dihydroxy-3-methylpentanoate = (S)-3-methyl-2-oxopentanoate + H2O. It participates in amino-acid biosynthesis; L-isoleucine biosynthesis; L-isoleucine from 2-oxobutanoate: step 3/4. It functions in the pathway amino-acid biosynthesis; L-valine biosynthesis; L-valine from pyruvate: step 3/4. Functions in the biosynthesis of branched-chain amino acids. Catalyzes the dehydration of (2R,3R)-2,3-dihydroxy-3-methylpentanoate (2,3-dihydroxy-3-methylvalerate) into 2-oxo-3-methylpentanoate (2-oxo-3-methylvalerate) and of (2R)-2,3-dihydroxy-3-methylbutanoate (2,3-dihydroxyisovalerate) into 2-oxo-3-methylbutanoate (2-oxoisovalerate), the penultimate precursor to L-isoleucine and L-valine, respectively. The protein is Dihydroxy-acid dehydratase of Actinobacillus pleuropneumoniae serotype 5b (strain L20).